A 306-amino-acid polypeptide reads, in one-letter code: Curved DNA-binding protein (306 aa).

One can recognise a J domain in the interval 5 to 69 (DYYAIMGVKP…QRRAEYDQMW (65 aa)).

The protein localises to the cytoplasm. It is found in the nucleoid. Functionally, DNA-binding protein that preferentially recognizes a curved DNA sequence. It is probably a functional analog of DnaJ; displays overlapping activities with DnaJ, but functions under different conditions, probably acting as a molecular chaperone in an adaptive response to environmental stresses other than heat shock. Lacks autonomous chaperone activity; binds native substrates and targets them for recognition by DnaK. Its activity is inhibited by the binding of CbpM. The polypeptide is Curved DNA-binding protein (Escherichia coli (strain K12 / MC4100 / BW2952)).